Reading from the N-terminus, the 141-residue chain is Vesicle-associated membrane protein 4 (141 aa).

The disordered stretch occupies residues 1 to 51 (MPPKFKRHLNDDDVTGSVKSERRNLLEDDSDEEEDFFLRGPSGPRFGPRND). Topologically, residues 1-118 (MPPKFKRHLN…MWWRGCKIKA (118 aa)) are cytoplasmic. 2 positions are modified to phosphoserine: S17 and S30. One can recognise a v-SNARE coiled-coil homology domain in the interval 52–112 (KIKHVQNQVD…KQLRRQMWWR (61 aa)). The chain crosses the membrane as a helical; Anchor for type IV membrane protein span at residues 119 to 139 (IMALAAAILLLMIIILIVVKF). Residues 140–141 (RT) are Vesicular-facing.

This sequence belongs to the synaptobrevin family. Identified in a complex containing STX6, STX12, VAMP4 and VTI1A. Interacts with BAIAP3; this interaction is increased in the presence of calcium. In terms of processing, (Microbial infection) Targeted and hydrolyzed by C.botulinum neurotoxin type X (BoNT/X) which hydrolyzes the 87-Arg-|-Ser-88 bond and probably inhibits neurotransmitter release. It remains unknown whether BoNT/X is ever produced, or what organisms it targets.

It localises to the golgi apparatus. Its subcellular location is the trans-Golgi network membrane. Involved in the pathway that functions to remove an inhibitor (probably synaptotagmin-4) of calcium-triggered exocytosis during the maturation of secretory granules. May be a marker for this sorting pathway that is critical for remodeling the secretory response of granule. This chain is Vesicle-associated membrane protein 4 (Vamp4), found in Mus musculus (Mouse).